Here is a 198-residue protein sequence, read N- to C-terminus: Recombination protein RecR (198 aa).

A C4-type zinc finger spans residues C57–C72. Residues T80–P175 form the Toprim domain.

The protein belongs to the RecR family.

Its function is as follows. May play a role in DNA repair. It seems to be involved in an RecBC-independent recombinational process of DNA repair. It may act with RecF and RecO. This is Recombination protein RecR from Burkholderia vietnamiensis (strain G4 / LMG 22486) (Burkholderia cepacia (strain R1808)).